Here is a 414-residue protein sequence, read N- to C-terminus: 2,3-diketo-5-methylthiopentyl-1-phosphate enolase (414 aa).

The active-site Proton acceptor is Lys-99. Residues Lys-148, 174–177 (KDDE), His-265, Gly-338, and 360–361 (GG) each bind substrate. Positions 174, 176, and 177 each coordinate Mg(2+). Lys-174 is modified (N6-carboxylysine).

This sequence belongs to the RuBisCO large chain family. Type IV subfamily. Homodimer. The cofactor is Mg(2+).

The catalysed reaction is 5-methylsulfanyl-2,3-dioxopentyl phosphate = 2-hydroxy-5-methylsulfanyl-3-oxopent-1-enyl phosphate. The protein operates within amino-acid biosynthesis; L-methionine biosynthesis via salvage pathway; L-methionine from S-methyl-5-thio-alpha-D-ribose 1-phosphate: step 3/6. In terms of biological role, catalyzes the enolization of 2,3-diketo-5-methylthiopentyl-1-phosphate (DK-MTP-1-P) into 2-hydroxy-3-keto-5-methylthiopentenyl-1-phosphate (HK-MTPenyl-1-P). This Bacillus anthracis (strain CDC 684 / NRRL 3495) protein is 2,3-diketo-5-methylthiopentyl-1-phosphate enolase.